We begin with the raw amino-acid sequence, 309 residues long: Taste receptor type 2 member 45 (309 aa).

A topological domain (extracellular) is located at residue Met1. A helical membrane pass occupies residues 2–22 (ITFLPIIFSILVVVTFVIGNF). Residues 23–55 (ANGFIALVNSTEWVKRQKISFADQIVTALAVSR) are Cytoplasmic-facing. The chain crosses the membrane as a helical span at residues 56–76 (VGLLWVLLLNWYSTVLNPAFY). Residues 77 to 98 (SVELRTTAYNIWAVTGHFSNWL) are Extracellular-facing. A helical transmembrane segment spans residues 99–119 (ATSLSIFYLLKIANFSNLIFL). The Cytoplasmic portion of the chain corresponds to 120–126 (HLKRRVK). Residues 127 to 147 (SVILVMLLGPLLFLACHLFVV) form a helical membrane-spanning segment. At 148–178 (NMNQIVWTKEYEGNMTWKIKLRRAMYLSDTT) the chain is on the extracellular side. Asn161 carries N-linked (GlcNAc...) asparagine glycosylation. Residues 179 to 199 (VTMLANLVPFTVTLISFLLLV) form a helical membrane-spanning segment. Topologically, residues 200-229 (CSLCEHLKKMQLHGKGSQDPSTKVHIKALQ) are cytoplasmic. The chain crosses the membrane as a helical span at residues 230-250 (TVISFLLLCAIYFVSVIISVW). Residues 251–259 (SFKNLENKP) lie on the Extracellular side of the membrane. A helical transmembrane segment spans residues 260–280 (VFMFCQAIGFSCSSAHPFILI). At 281 to 309 (WGNKKLKQPFLSVLWQMRYWVKGEKPSSS) the chain is on the cytoplasmic side.

Belongs to the G-protein coupled receptor T2R family.

Its subcellular location is the membrane. Functionally, receptor that may play a role in the perception of bitterness and is gustducin-linked. May play a role in sensing the chemical composition of the gastrointestinal content. The activity of this receptor may stimulate alpha gustducin, mediate PLC-beta-2 activation and lead to the gating of TRPM5. The polypeptide is Taste receptor type 2 member 45 (TAS2R45) (Pan paniscus (Pygmy chimpanzee)).